Consider the following 311-residue polypeptide: Mitochondrial ribosome-associated GTPase 1 (311 aa).

One can recognise a CP-type G domain in the interval 27-200 (AKGLKQMKTK…LFDTPGVLSP (174 aa)). Residues 74–77 (NKMD), 144–149 (NVGKSS), and Gly196 each bind GTP.

Belongs to the TRAFAC class YlqF/YawG GTPase family. MTG1 subfamily.

Its subcellular location is the mitochondrion inner membrane. Functionally, plays a role in the regulation of the mitochondrial ribosome assembly and of translational activity. Displays mitochondrial GTPase activity. In Xenopus tropicalis (Western clawed frog), this protein is Mitochondrial ribosome-associated GTPase 1.